The chain runs to 44 residues: Thymosin beta-4, Y-chromosomal (44 aa).

Residues 1-44 form a disordered region; it reads MSDKPGMAEIEKFDKSKLKKTETQEKNPLSSKETIEQERQAGES. Basic and acidic residues-rich tracts occupy residues 9 to 25 and 33 to 44; these read EIEK…ETQE and ETIEQERQAGES.

The protein belongs to the thymosin beta family. In terms of tissue distribution, ubiquitous.

It localises to the cytoplasm. The protein localises to the cytoskeleton. Plays an important role in the organization of the cytoskeleton. Binds to and sequesters actin monomers (G actin) and therefore inhibits actin polymerization. This is Thymosin beta-4, Y-chromosomal (TMSB4Y) from Homo sapiens (Human).